A 470-amino-acid polypeptide reads, in one-letter code: Cysteine--tRNA ligase (470 aa).

Cys46 contacts Zn(2+). Residues 48-58 (PTVYDLAHIGN) carry the 'HIGH' region motif. The Zn(2+) site is built by Cys230, His255, and Glu259. Residues 288 to 292 (KMSKS) carry the 'KMSKS' region motif. Lys291 contributes to the ATP binding site.

The protein belongs to the class-I aminoacyl-tRNA synthetase family. In terms of assembly, monomer. It depends on Zn(2+) as a cofactor.

It is found in the cytoplasm. It carries out the reaction tRNA(Cys) + L-cysteine + ATP = L-cysteinyl-tRNA(Cys) + AMP + diphosphate. This chain is Cysteine--tRNA ligase, found in Granulibacter bethesdensis (strain ATCC BAA-1260 / CGDNIH1).